We begin with the raw amino-acid sequence, 185 residues long: MINEIQNDAQERMGKSVDALKNQLVKIRTGRAHPSLLDTIYVEYYGANTPLKQLANVVAEDSRTLAITVFDRELTPKIEKAIMMSDLGLNPMSAGTVIRVPLPPLTEERRRDLVKIVRKEAEQGRVAIRNIRRDANADLKALLKDKEISEDDDRRAQDEIQKLTDVAVKNIEAVLEVKEKELMEV.

The protein belongs to the RRF family.

The protein resides in the cytoplasm. Functionally, responsible for the release of ribosomes from messenger RNA at the termination of protein biosynthesis. May increase the efficiency of translation by recycling ribosomes from one round of translation to another. This chain is Ribosome-recycling factor, found in Photobacterium profundum (strain SS9).